An 845-amino-acid chain; its full sequence is uncharacterized protein (845 aa).

Disordered regions lie at residues arginine 17–proline 37 and alanine 550–leucine 573. A coiled-coil region spans residues leucine 622–arginine 707.

This is an uncharacterized protein from Saccharum officinarum (Sugarcane).